The sequence spans 89 residues: MAKESMKAREVKRAKLVAKYAAKRAALKAEGNYEALQLLPKNASPVRLHNRCSMTGRPKGYMRQFGISRIQFREMASAGLIPGVKKASW.

Belongs to the universal ribosomal protein uS14 family. As to quaternary structure, part of the 30S ribosomal subunit. Contacts proteins S3 and S10.

Functionally, binds 16S rRNA, required for the assembly of 30S particles and may also be responsible for determining the conformation of the 16S rRNA at the A site. The chain is Small ribosomal subunit protein uS14 from Porphyromonas gingivalis (strain ATCC 33277 / DSM 20709 / CIP 103683 / JCM 12257 / NCTC 11834 / 2561).